A 643-amino-acid polypeptide reads, in one-letter code: Alpha-dioxygenase PIOX (643 aa).

Histidine 168 (proton acceptor) is an active-site residue. Ca(2+) is bound at residue aspartate 169. Residue histidine 173 coordinates heme b. Residues threonine 221, tryptophan 223, aspartate 225, and serine 227 each coordinate Ca(2+). Residues histidine 393, arginine 490, and arginine 494 each contribute to the heme b site.

Belongs to the peroxidase family. It depends on heme b as a cofactor. The cofactor is Ca(2+).

It carries out the reaction hexadecanoate + O2 = (2R)-2-hydroperoxyhexadecanoate. It catalyses the reaction dodecanoate + O2 = (2R)-2-hydroperoxydodecanoate. Alpha-dioxygenase that catalyzes the primary oxygenation step of a variety of 14-20 carbon fatty acids, containing up to three unsaturated bonds, into their corresponding 2R-hydroperoxides. Involved in the production of oxylipins that function in cell signaling, wound healing, and protection from infection. The alpha-oxidation pathway of fatty acids may play a role during plant developmental processes. The polypeptide is Alpha-dioxygenase PIOX (Pisum sativum (Garden pea)).